The chain runs to 491 residues: Ketol-acid reductoisomerase (NADP(+)) (491 aa).

One can recognise a KARI N-terminal Rossmann domain in the interval 16-207 (IKKCRFMKEN…GGHRAGVLES (192 aa)). NADP(+) contacts are provided by residues 44–47 (CGSQ), Lys67, Ser77, and 107–109 (DKQ). His131 is a catalytic residue. Gly157 serves as a coordination point for NADP(+). KARI C-terminal knotted domains follow at residues 208 to 344 (SFIA…NILS) and 345 to 484 (YSEK…MKEM). Mg(2+) contacts are provided by Asp216, Glu220, Glu389, and Glu393. Ser414 serves as a coordination point for substrate.

Belongs to the ketol-acid reductoisomerase family. It depends on Mg(2+) as a cofactor.

It catalyses the reaction (2R)-2,3-dihydroxy-3-methylbutanoate + NADP(+) = (2S)-2-acetolactate + NADPH + H(+). The catalysed reaction is (2R,3R)-2,3-dihydroxy-3-methylpentanoate + NADP(+) = (S)-2-ethyl-2-hydroxy-3-oxobutanoate + NADPH + H(+). Its pathway is amino-acid biosynthesis; L-isoleucine biosynthesis; L-isoleucine from 2-oxobutanoate: step 2/4. It functions in the pathway amino-acid biosynthesis; L-valine biosynthesis; L-valine from pyruvate: step 2/4. Involved in the biosynthesis of branched-chain amino acids (BCAA). Catalyzes an alkyl-migration followed by a ketol-acid reduction of (S)-2-acetolactate (S2AL) to yield (R)-2,3-dihydroxy-isovalerate. In the isomerase reaction, S2AL is rearranged via a Mg-dependent methyl migration to produce 3-hydroxy-3-methyl-2-ketobutyrate (HMKB). In the reductase reaction, this 2-ketoacid undergoes a metal-dependent reduction by NADPH to yield (R)-2,3-dihydroxy-isovalerate. This is Ketol-acid reductoisomerase (NADP(+)) from Buchnera aphidicola subsp. Schizaphis graminum (strain Sg).